The sequence spans 706 residues: Forkhead box protein P2 (706 aa).

Polar residues predominate over residues 1–28 (MMQESATETISNSSMNQNGMSTLSSQLD). Disordered regions lie at residues 1 to 45 (MMQE…SEVS) and 275 to 305 (IKHG…ITHH). Residues 287–296 (SSSTTSTTTS) show a composition bias toward low complexity. Residues 337 to 362 (GVCKWPGCENICEDFGQFLKHLNNEH) form a C2H2-type zinc finger. Residues 379 to 400 (VQQLEIQLSKERERLQAMMTHL) form a leucine-zipper region. A ctbp1-binding region spans residues 413–417 (PLNLV). Residues 495–585 (RPPFTYATLI…SQKITASPTL (91 aa)) constitute a DNA-binding region (fork-head). A disordered region spans residues 672-706 (DDEDCPMSLVTTANHSPELEEDRELEEEPLSEDLE). Acidic residues predominate over residues 690-706 (LEEDRELEEEPLSEDLE).

Dimerization is required for DNA-binding. At stage 15, expressed in the anterior/superior eye field and the caudal branchial arch. At later stages, expression persists in the retina and in the caudal branchial arch. Expressed in the pronephros and the tip of the tail. Beginning with stage 35, expression in the brain is localized to distinct subdomains of the anterior prosencephalon, the medial mesencephalon and to lateral domains of the hindbrain.

Its subcellular location is the nucleus. In terms of biological role, transcriptional repressor. The protein is Forkhead box protein P2 of Xenopus laevis (African clawed frog).